Reading from the N-terminus, the 159-residue chain is Cyclic pyranopterin monophosphate synthase (159 aa).

Substrate is bound by residues 76–78 (LCH) and 114–115 (ME). Asp129 is a catalytic residue.

This sequence belongs to the MoaC family. As to quaternary structure, homohexamer; trimer of dimers.

The enzyme catalyses (8S)-3',8-cyclo-7,8-dihydroguanosine 5'-triphosphate = cyclic pyranopterin phosphate + diphosphate. It participates in cofactor biosynthesis; molybdopterin biosynthesis. In terms of biological role, catalyzes the conversion of (8S)-3',8-cyclo-7,8-dihydroguanosine 5'-triphosphate to cyclic pyranopterin monophosphate (cPMP). This Clostridium botulinum (strain Alaska E43 / Type E3) protein is Cyclic pyranopterin monophosphate synthase.